Reading from the N-terminus, the 220-residue chain is Protein-L-isoaspartate O-methyltransferase (220 aa).

Residue S70 is part of the active site.

This sequence belongs to the methyltransferase superfamily. L-isoaspartyl/D-aspartyl protein methyltransferase family.

It localises to the cytoplasm. It carries out the reaction [protein]-L-isoaspartate + S-adenosyl-L-methionine = [protein]-L-isoaspartate alpha-methyl ester + S-adenosyl-L-homocysteine. Its function is as follows. Catalyzes the methyl esterification of L-isoaspartyl residues in peptides and proteins that result from spontaneous decomposition of normal L-aspartyl and L-asparaginyl residues. It plays a role in the repair and/or degradation of damaged proteins. The sequence is that of Protein-L-isoaspartate O-methyltransferase from Halorhodospira halophila (strain DSM 244 / SL1) (Ectothiorhodospira halophila (strain DSM 244 / SL1)).